The chain runs to 95 residues: Protein E7 (95 aa).

The E7 terminal domain stretch occupies residues 1–41; sequence MHGNVATIEDIVLDLKPEPFDLYCREQLEDSDAEDETAVTQ. The short motif at 22 to 26 is the LXCXE motif; interaction with host RB1 and TMEM173/STING element; it reads LYCRE. The segment at 53–91 is a zinc-finger region; it reads CGGVCCKTVRLCVYSTHTGIRVLQELLHQDALQIVCPTC. The Nuclear export signal motif lies at 72–80; sequence IRVLQELLH.

This sequence belongs to the papillomaviridae E7 protein family. In terms of assembly, homodimer. Homooligomer. Interacts with host RB1; this interaction induces dissociation of RB1-E2F1 complex thereby disrupting RB1 activity. Interacts with host EP300; this interaction represses EP300 transcriptional activity. Interacts with protein E2; this interaction inhibits E7 oncogenic activity. Interacts with host TMEM173/STING; this interaction impairs the ability of TMEM173/STING to sense cytosolic DNA and promote the production of type I interferon (IFN-alpha and IFN-beta). Highly phosphorylated.

Its subcellular location is the host cytoplasm. It is found in the host nucleus. Plays a role in viral genome replication by driving entry of quiescent cells into the cell cycle. Stimulation of progression from G1 to S phase allows the virus to efficiently use the cellular DNA replicating machinery to achieve viral genome replication. E7 protein has both transforming and trans-activating activities. Induces the disassembly of the E2F1 transcription factor from RB1, with subsequent transcriptional activation of E2F1-regulated S-phase genes. Interferes with host histone deacetylation mediated by HDAC1 and HDAC2, leading to transcription activation. Also plays a role in the inhibition of both antiviral and antiproliferative functions of host interferon alpha. Interaction with host TMEM173/STING impairs the ability of TMEM173/STING to sense cytosolic DNA and promote the production of type I interferon (IFN-alpha and IFN-beta). The protein is Protein E7 of Human papillomavirus type 54.